Here is a 3748-residue protein sequence, read N- to C-terminus: Intermembrane lipid transfer protein VPS13C (3748 aa).

In terms of domain architecture, Chorein N-terminal spans 3 to 115 (LESVVADLLN…SLQDIKQKEL (113 aa)). The residue at position 132 (Ser132) is a Phosphoserine. Residue Thr613 is modified to Phosphothreonine. Ser618 carries the post-translational modification Phosphoserine. Position 623 is a phosphothreonine (Thr623). Phosphoserine is present on residues Ser736, Ser841, Ser871, and Ser873. The FFAT signature appears at 876–882 (EFFDAED). Thr1968 carries the post-translational modification Phosphothreonine. Residues Ser1974 and Ser2442 each carry the phosphoserine modification. Positions 2410–3304 (DYSLKDRAPF…IQQDIDALNT (895 aa)) are required for late endosome/lysosome localization. An SHR-BD domain is found at 2760 to 3012 (ELSVFSPYWL…LFAWADPTGI (253 aa)). A required for lipid droplet localization region spans residues 3305-3748 (ELMESSMTDM…VKLLRPQGPS (444 aa)). Residues Arg3514 and Arg3521 each carry the omega-N-methylarginine modification. Position 3533 is an N6-acetyllysine (Lys3533).

The protein belongs to the VPS13 family.

The protein resides in the mitochondrion outer membrane. Its subcellular location is the lipid droplet. It is found in the endoplasmic reticulum membrane. The protein localises to the lysosome membrane. It localises to the late endosome membrane. Functionally, mediates the transfer of lipids between membranes at organelle contact sites. Necessary for proper mitochondrial function and maintenance of mitochondrial transmembrane potential. Involved in the regulation of PINK1/PRKN-mediated mitophagy in response to mitochondrial depolarization. The polypeptide is Intermembrane lipid transfer protein VPS13C (Mus musculus (Mouse)).